Consider the following 537-residue polypeptide: Tyrosine-protein kinase Fyn (537 aa).

Gly-2 carries N-myristoyl glycine lipidation. 2 S-palmitoyl cysteine lipidation sites follow: Cys-3 and Cys-6. Thr-12 bears the Phosphothreonine; by PKC mark. A phosphoserine mark is found at Ser-21 and Ser-26. Positions 82–143 (TGVTLFVALY…PSNYVAPVDS (62 aa)) constitute an SH3 domain. Residues 149–246 (WYFGKLGRKD…GLCCRLVVPC (98 aa)) enclose the SH2 domain. Tyr-185 is modified (phosphotyrosine). The 254-residue stretch at 271–524 (LQLIKRLGNG…YLQGFLEDYF (254 aa)) folds into the Protein kinase domain. ATP-binding positions include 277 to 285 (LGNGQFGEV) and Lys-299. The active-site Proton acceptor is the Asp-390. Tyr-420 carries the phosphotyrosine; by autocatalysis modification. Tyr-531 carries the post-translational modification Phosphotyrosine; by CSK.

It belongs to the protein kinase superfamily. Tyr protein kinase family. SRC subfamily. As to quaternary structure, interacts (via its SH3 domain) with PIK3R1 and PRMT8. Interacts with FYB1, PAG1, and SH2D1A. Interacts with CD79A (tyrosine-phosphorylated form); the interaction increases FYN activity. Interacts (via SH2 domain) with CSF1R (tyrosine phosphorylated). Interacts with TOM1L1 (phosphorylated form). Interacts with KDR (tyrosine phosphorylated). Interacts (via SH3 domain) with KLHL2 (via N-terminus). Interacts with SH2D1A and SLAMF1. Interacts with ITCH; the interaction phosphorylates ITCH and negatively regulates its activity. Interacts with FASLG. Interacts with RUNX3. Interacts with KIT. Interacts with EPHA8; possible downstream effector of EPHA8 in regulation of cell adhesion. Interacts with PTK2/FAK1; this interaction leads to PTK2/FAK1 phosphorylation and activation. Interacts with CAV1; this interaction couples integrins to the Ras-ERK pathway. Interacts with UNC119. Interacts (via SH2 domain) with PTPRH (phosphorylated form). Interacts with PTPRO (phosphorylated form). Interacts with PTPRB (phosphorylated form). Interacts with FYB2. Interacts with DSCAM. Interacts with SKAP1 and FYB1; this interaction promotes the phosphorylation of CLNK. Interacts with NEDD9; in the presence of PTK2. It depends on Mn(2+) as a cofactor. Autophosphorylated at Tyr-420. Phosphorylation on the C-terminal tail at Tyr-531 by CSK maintains the enzyme in an inactive state. PTPRC/CD45 dephosphorylates Tyr-531 leading to activation. Ultraviolet B (UVB) strongly increase phosphorylation at Thr-12 and kinase activity, and promotes translocation from the cytoplasm to the nucleus. Dephosphorylation at Tyr-420 by PTPN2 negatively regulates T-cell receptor signaling. Phosphorylated at tyrosine residues, which can be enhanced by NTN1. In terms of processing, palmitoylated. Palmitoylation at Cys-3 and Cys-6, probably by ZDHHC21, regulates subcellular location.

The protein resides in the cytoplasm. Its subcellular location is the nucleus. It localises to the cell membrane. It is found in the perikaryon. The enzyme catalyses L-tyrosyl-[protein] + ATP = O-phospho-L-tyrosyl-[protein] + ADP + H(+). With respect to regulation, inhibited by phosphorylation of Tyr-531 by leukocyte common antigen and activated by dephosphorylation of this site. In terms of biological role, non-receptor tyrosine-protein kinase that plays a role in many biological processes including regulation of cell growth and survival, cell adhesion, integrin-mediated signaling, cytoskeletal remodeling, cell motility, immune response and axon guidance. Inactive FYN is phosphorylated on its C-terminal tail within the catalytic domain. Following activation by PKA, the protein subsequently associates with PTK2/FAK1, allowing PTK2/FAK1 phosphorylation, activation and targeting to focal adhesions. Involved in the regulation of cell adhesion and motility through phosphorylation of CTNNB1 (beta-catenin) and CTNND1 (delta-catenin). Regulates cytoskeletal remodeling by phosphorylating several proteins including the actin regulator WAS and the microtubule-associated proteins MAP2 and MAPT. Promotes cell survival by phosphorylating AGAP2/PIKE-A and preventing its apoptotic cleavage. Participates in signal transduction pathways that regulate the integrity of the glomerular slit diaphragm (an essential part of the glomerular filter of the kidney) by phosphorylating several slit diaphragm components including NPHS1, KIRREL1 and TRPC6. Plays a role in neural processes by phosphorylating DPYSL2, a multifunctional adapter protein within the central nervous system, ARHGAP32, a regulator for Rho family GTPases implicated in various neural functions, and SNCA, a small pre-synaptic protein. Involved in reelin signaling by mediating phosphorylation of DAB1 following reelin (RELN)-binding to its receptor. Participates in the downstream signaling pathways that lead to T-cell differentiation and proliferation following T-cell receptor (TCR) stimulation. Phosphorylates PTK2B/PYK2 in response to T-cell receptor activation. Also participates in negative feedback regulation of TCR signaling through phosphorylation of PAG1, thereby promoting interaction between PAG1 and CSK and recruitment of CSK to lipid rafts. CSK maintains LCK and FYN in an inactive form. Promotes CD28-induced phosphorylation of VAV1. In mast cells, phosphorylates CLNK after activation of immunoglobulin epsilon receptor signaling. Can also promote CD244-mediated NK cell activation. This is Tyrosine-protein kinase Fyn from Sus scrofa (Pig).